We begin with the raw amino-acid sequence, 1071 residues long: ATP-dependent helicase/deoxyribonuclease subunit B (1071 aa).

The protein belongs to the helicase family. AddB/RexB type 2 subfamily. In terms of assembly, heterodimer of AddA and RexB. Requires Mg(2+) as cofactor.

Functionally, the heterodimer acts as both an ATP-dependent DNA helicase and an ATP-dependent, dual-direction single-stranded exonuclease. Recognizes the chi site generating a DNA molecule suitable for the initiation of homologous recombination. This subunit has 5' -&gt; 3' nuclease activity but not helicase activity. The chain is ATP-dependent helicase/deoxyribonuclease subunit B from Streptococcus pyogenes serotype M6 (strain ATCC BAA-946 / MGAS10394).